Consider the following 1159-residue polypeptide: Calcium-activated potassium channel subunit alpha-1 (1159 aa).

At 1–24 (EPNMDALIIPVTMEVPCDSRGQRM) the chain is on the extracellular side. A helical transmembrane segment spans residues 25-45 (WWAFLASSMVTFFGGLFIILL). Topologically, residues 46-116 (WRTLKYLWTV…MISAQTLTGR (71 aa)) are cytoplasmic. 3 S-palmitoyl cysteine lipidation sites follow: cysteine 56, cysteine 57, and cysteine 59. The helical transmembrane segment at 117–137 (VLVVLVFALSIGALVIYFIDS) threads the bilayer. Topologically, residues 138-152 (SNPIESCQNFYKDFT) are extracellular. The helical transmembrane segment at 153 to 173 (LQIDMAFNVFFLLYFGLRFIA) threads the bilayer. Residues 174 to 177 (ANDN) lie on the Cytoplasmic side of the membrane. A helical membrane pass occupies residues 178 to 198 (LWFWLEVNSVVDFFTVPPVFV). Residues 199 to 202 (SVYL) lie on the Extracellular side of the membrane. A helical; Voltage-sensor membrane pass occupies residues 203 to 223 (NRSWLGLRFLRALRLIQFSEI). The Cytoplasmic portion of the chain corresponds to 224–238 (LQFLNILKTSNSIKL). The helical transmembrane segment at 239-259 (VNLLSIFISTWLTAAGFIHLV) threads the bilayer. Over 260 to 273 (ENSGDPWENFQNSQ) the chain is Extracellular. Positions 274-296 (ALTYWECVYLLMVTMSTVGYGDV) form an intramembrane region, pore-forming. Residues 290 to 293 (TVGY) carry the Selectivity for potassium motif. Topologically, residues 297 to 305 (YAKTTPGGL) are extracellular. The helical transmembrane segment at 306–326 (FIVFFILGGLAMFASYVPEII) threads the bilayer. At 327–1159 (EIIGNRKKYG…PPIREVEDEC (833 aa)) the chain is on the cytoplasmic side. One can recognise an RCK N-terminal 1 domain in the interval 345–487 (RKHIVVCGHI…WNWKEGDDAI (143 aa)). 3 residues coordinate Mg(2+): glutamate 377, glutamine 400, and glutamate 402. The segment at 494-514 (LGFIAQSCLAQGLSTMLANLF) is segment S7. The interval 551-571 (LSFPTVCELCFVKLKLLMIAI) is segment S8. The tract at residues 615 to 619 (CKACH) is heme-binding motif. Residues 639-668 (EQPSTLSPKKKQRNGGMRNSPSSSPKLMRH) are disordered. The residue at position 643 (threonine 643) is a Phosphothreonine. A phosphoserine mark is found at serine 645, serine 658, and serine 662. A segment S9 region spans residues 717 to 737 (VLSGHVVVCIFGHVSSALIGL). One can recognise an RCK N-terminal 2 domain in the interval 719–863 (SGHVVVCIFG…MDKSSPDNSP (145 aa)). Threonine 850 bears the Phosphothreonine mark. Residues serine 858 and serine 862 each carry the phosphoserine modification. The short motif at 883–905 (TELVNDTNVQFLDQDDDDDPDTE) is the Calcium bowl element. Ca(2+)-binding residues include glutamine 892, aspartate 895, aspartate 898, and aspartate 900. The segment at 912–932 (FACGTAFAVSVLDSLMSATYF) is segment S10. A compositionally biased stretch (low complexity) spans 1066-1091 (RASLSHSSHSSQSSSKKSSSVHSIPS). The tract at residues 1066-1124 (RASLSHSSHSSQSSSKKSSSVHSIPSTANRQNRPKSRESRDKQTEKKWFTDEPDNAYPR) is disordered. The span at 1100-1115 (KSRESRDKQTEKKWFT) shows a compositional bias: basic and acidic residues. 2 positions are modified to phosphoserine: serine 1101 and serine 1104.

It belongs to the potassium channel family. Calcium-activated (TC 1.A.1.3) subfamily. KCa1.1/KCNMA1 sub-subfamily. In terms of assembly, homotetramer; which constitutes the calcium-activated potassium channel. Interacts with beta subunits KCNMB1, KCNMB2, KCNMB3 and KCNMB4. Interacts with gamma subunits LRRC26, LRRC38, LRRC52 and LRRC55. Beta and gamma subunits are accessory, and modulate its activity. Interacts with RAB11B. Phosphorylated. Phosphorylation by kinases such as PKA and/or PKG. In smooth muscles, phosphorylation affects its activity. Post-translationally, palmitoylation by ZDHHC22 and ZDHHC23 within the intracellular linker between the S0 and S1 transmembrane domains regulates localization to the plasma membrane. Depalmitoylated by LYPLA1 and LYPLAL1, leading to retard exit from the trans-Golgi network. Expressed in all vascular and smooth muscles.

It localises to the cell membrane. The enzyme catalyses K(+)(in) = K(+)(out). With respect to regulation, ethanol and carbon monoxide-bound heme increase channel activation. Heme inhibits channel activation. In terms of biological role, potassium channel activated by both membrane depolarization or increase in cytosolic Ca(2+) that mediates export of K(+). It is also activated by the concentration of cytosolic Mg(2+). Its activation dampens the excitatory events that elevate the cytosolic Ca(2+) concentration and/or depolarize the cell membrane. It therefore contributes to repolarization of the membrane potential. Plays a key role in controlling excitability in a number of systems, such as regulation of the contraction of smooth muscle, the tuning of hair cells in the cochlea, regulation of transmitter release, and innate immunity. In smooth muscles, its activation by high level of Ca(2+), caused by ryanodine receptors in the sarcoplasmic reticulum, regulates the membrane potential. In cochlea cells, its number and kinetic properties partly determine the characteristic frequency of each hair cell and thereby helps to establish a tonotopic map. Kinetics of KCNMA1 channels are determined by alternative splicing, phosphorylation status and its combination with modulating beta subunits. Highly sensitive to both iberiotoxin (IbTx) and charybdotoxin (CTX). The chain is Calcium-activated potassium channel subunit alpha-1 (KCNMA1) from Canis lupus familiaris (Dog).